A 184-amino-acid polypeptide reads, in one-letter code: Endoribonuclease YbeY (184 aa).

Positions 118, 122, and 128 each coordinate Zn(2+).

It belongs to the endoribonuclease YbeY family. Zn(2+) serves as cofactor.

The protein localises to the cytoplasm. Single strand-specific metallo-endoribonuclease involved in late-stage 70S ribosome quality control and in maturation of the 3' terminus of the 16S rRNA. In Nocardia farcinica (strain IFM 10152), this protein is Endoribonuclease YbeY.